The primary structure comprises 226 residues: Lipoprotein signal peptidase (226 aa).

3 helical membrane passes run 12–32, 69–89, and 103–123; these read KVVA…KIWV, FLSL…AKLV, and SLII…GVIF. Catalysis depends on residues Asp150 and Asp184. A helical transmembrane segment spans residues 173–193; the sequence is FVFFHPVFNFADSCISIGLIL.

The protein belongs to the peptidase A8 family.

The protein localises to the cell inner membrane. The enzyme catalyses Release of signal peptides from bacterial membrane prolipoproteins. Hydrolyzes -Xaa-Yaa-Zaa-|-(S,diacylglyceryl)Cys-, in which Xaa is hydrophobic (preferably Leu), and Yaa (Ala or Ser) and Zaa (Gly or Ala) have small, neutral side chains.. It functions in the pathway protein modification; lipoprotein biosynthesis (signal peptide cleavage). In terms of biological role, this protein specifically catalyzes the removal of signal peptides from prolipoproteins. This Porphyromonas gingivalis (strain ATCC 33277 / DSM 20709 / CIP 103683 / JCM 12257 / NCTC 11834 / 2561) protein is Lipoprotein signal peptidase.